Consider the following 98-residue polypeptide: Leydig cell tumor 10 kDa protein homolog (98 aa).

2 disordered regions span residues 1–38 and 73–98; these read MAQG…RVIA and SLPK…KMPA. Residues 16 to 25 are compositionally biased toward low complexity; that stretch reads SKAAAAAASA. Residues 28-38 are compositionally biased toward basic residues; that stretch reads RGPRKGGRVIA. Over residues 73–83 the composition is skewed to low complexity; sequence SLPKKLALLKA.

The protein belongs to the UPF0390 family.

In terms of biological role, may have a potential role in hypercalcemia of malignancy. This Bos taurus (Bovine) protein is Leydig cell tumor 10 kDa protein homolog.